The primary structure comprises 496 residues: MTTLTKIQVYPQVLEHRLFFRDPIRVGSRLTCRERSNRVYVHRCEKKVERKRKVEKFKGNGSWDSLKSGFLGFSKLGFLSKDEYNQKVENLEMVFSSVAVQIARYIVTMTSTGAILLIGFQLSGGDSSMNSLVWYSWLGGIIIGTMTGANMVLEDHYRAGPRNVVITGSTRGLGKALAREFLLSGDRVIVTSRSSESVDMTVKELEQNLKEIMSNASESARKKLSDAKVVGIACDVCKPEDVEKLSNFAVKELGSINIWINNAGTNKGFRPLLEFTEEDITQIVSTNLIGSILCTRGAMDVMSRQHSGGHIFNMDGAGSGGSSTPLTAVYGSTKCGLRQFHGSIVKESQKTNVGLHTASPGMVLTELLLSGSSIKNKQMFNIICELPETVARTLVPRMRVVKGSGKAVNYLTPPRILLAIVTSWLRRGRWFDDQGRALYAAEADRLRNWAENRTRLSLTDAMEMYTENTWVSVFSLSVVCAFIILQSTTPSSFPGT.

A chloroplast-targeting transit peptide spans 1-43 (MTTLTKIQVYPQVLEHRLFFRDPIRVGSRLTCRERSNRVYVHR). 2 helical membrane passes run 105-125 (YIVTMTSTGAILLIGFQLSGG) and 132-152 (LVWYSWLGGIIIGTMTGANMV). 166-190 (ITGSTRGLGKALAREFLLSGDRVIV) is a binding site for NAD(+). Positions 195 to 224 (SESVDMTVKELEQNLKEIMSNASESARKKL) form a coiled coil. The Proton acceptor role is filled by tyrosine 330. The chain crosses the membrane as a helical span at residues 470 to 490 (WVSVFSLSVVCAFIILQSTTP).

It belongs to the short-chain dehydrogenases/reductases (SDR) family. In terms of assembly, interacts with NOL to form a complex that acts as a chlorophyll b reductase. Interacts with HCAR, RCCR, SGR1 and the LHCII complex. Part of a SGR1-CCE-LHCII complex, which acts in chlorophyll breakdown.

It is found in the plastid. The protein resides in the chloroplast thylakoid membrane. The enzyme catalyses 7(1)-hydroxychlorophyllide a + NAD(+) = chlorophyllide b + NADH + H(+). It catalyses the reaction 7(1)-hydroxychlorophyllide a + NADP(+) = chlorophyllide b + NADPH + H(+). In terms of biological role, involved in chlorophyll b degradation. Belongs to the chlorophyll catabolic enzymes (CCEs). The chain is Probable chlorophyll(ide) b reductase NYC1, chloroplastic (NYC1) from Arabidopsis thaliana (Mouse-ear cress).